The primary structure comprises 399 residues: S-adenosylmethionine synthase (399 aa).

His17 contacts ATP. Asp19 contacts Mg(2+). Glu45 serves as a coordination point for K(+). Residues Glu58 and Gln101 each contribute to the L-methionine site. The segment at 101-111 (QSADIAMGVDQ) is flexible loop. ATP-binding positions include 177-179 (DGK), 244-245 (RF), Asp253, 259-260 (RK), Ala276, and Lys280. L-methionine is bound at residue Asp253. An L-methionine-binding site is contributed by Lys284.

Belongs to the AdoMet synthase family. In terms of assembly, homotetramer; dimer of dimers. The cofactor is Mg(2+). K(+) serves as cofactor.

It localises to the cytoplasm. The catalysed reaction is L-methionine + ATP + H2O = S-adenosyl-L-methionine + phosphate + diphosphate. The protein operates within amino-acid biosynthesis; S-adenosyl-L-methionine biosynthesis; S-adenosyl-L-methionine from L-methionine: step 1/1. Catalyzes the formation of S-adenosylmethionine (AdoMet) from methionine and ATP. The overall synthetic reaction is composed of two sequential steps, AdoMet formation and the subsequent tripolyphosphate hydrolysis which occurs prior to release of AdoMet from the enzyme. This is S-adenosylmethionine synthase from Bacillus thuringiensis subsp. konkukian (strain 97-27).